The chain runs to 288 residues: MQAKAFAKINLGLFITGKRPDGYHNLETIFAPINWYDTITFEAADTISMSCTNLDLPVDENNLCIKAARALQQAAGVQHGIAMTLEKKVPFGAGLGGGSSDAATVLRVLNHLWQLNLPHATLHNIAVKLGADVPYFLFSKGIAYAGGIGDELEDLQTSLPFAILTVFPNEHIATVWAYKNFYRRFELQRPNLNTLVKNLCTTGNTSALPSFENDFEAAVFDHFPTVRDVKTMLMENGALYASLSGSGSALFGLFANEAEAYAAIESLPATYRTNITPARFVMDDGTGL.

Lys8 is a catalytic residue. 90–100 contacts ATP; the sequence is PFGAGLGGGSS. Residue Asp132 is part of the active site.

It belongs to the GHMP kinase family. IspE subfamily.

The catalysed reaction is 4-CDP-2-C-methyl-D-erythritol + ATP = 4-CDP-2-C-methyl-D-erythritol 2-phosphate + ADP + H(+). Its pathway is isoprenoid biosynthesis; isopentenyl diphosphate biosynthesis via DXP pathway; isopentenyl diphosphate from 1-deoxy-D-xylulose 5-phosphate: step 3/6. Its function is as follows. Catalyzes the phosphorylation of the position 2 hydroxy group of 4-diphosphocytidyl-2C-methyl-D-erythritol. This chain is 4-diphosphocytidyl-2-C-methyl-D-erythritol kinase, found in Chlorobium chlorochromatii (strain CaD3).